The primary structure comprises 81 residues: Exodeoxyribonuclease 7 small subunit (81 aa).

This sequence belongs to the XseB family. In terms of assembly, heterooligomer composed of large and small subunits.

The protein localises to the cytoplasm. The catalysed reaction is Exonucleolytic cleavage in either 5'- to 3'- or 3'- to 5'-direction to yield nucleoside 5'-phosphates.. Functionally, bidirectionally degrades single-stranded DNA into large acid-insoluble oligonucleotides, which are then degraded further into small acid-soluble oligonucleotides. This chain is Exodeoxyribonuclease 7 small subunit, found in Paramagnetospirillum magneticum (strain ATCC 700264 / AMB-1) (Magnetospirillum magneticum).